The sequence spans 252 residues: Fatty acid elongase 4 (252 aa).

The helical transmembrane segment at 25 to 45 threads the bilayer; it reads LVSWHALVLGHLLYLFVVFVM. An N-linked (GlcNAc...) asparagine glycan is attached at N56. The helical transmembrane segment at 60 to 80 threads the bilayer; the sequence is VLVVYNVLQICLSAAMAINLS. An N-linked (GlcNAc...) asparagine glycan is attached at N89. The next 5 helical transmembrane spans lie at 100-120, 127-147, 150-170, 187-207, and 214-234; these read FWMF…VFIL, QLSF…GILL, GLAN…HFLM, FLLT…AILV, and FTLG…VLFL. The short motif at 132 to 136 is the HxxHH motif element; that stretch reads HVYHH. H135 serves as the catalytic Nucleophile.

The protein belongs to the ELO family.

It localises to the membrane. It catalyses the reaction (5Z,8Z,11Z,14Z)-eicosatetraenoyl-CoA + malonyl-CoA + H(+) = (7Z,10Z,13Z,16Z)-3-oxodocosatetraenoyl-CoA + CO2 + CoA. It functions in the pathway lipid metabolism; fatty acid biosynthesis. Functionally, involved in the synthesis of fatty acids. Elongates arachidonate and other C20 polyunsaturated fatty acids (PUFAs) with a preference for n-6 PUFAs. Not involved in fatty acid synthesis up to C18. In Trypanosoma brucei brucei (strain 927/4 GUTat10.1), this protein is Fatty acid elongase 4.